Reading from the N-terminus, the 482-residue chain is MVYLKNILIFLIIFLINPLVKKNKKSTKENDLKGPIALPIIGNLFGLRNDTYSIMDFYHKMYGGIYRLWFGDYFVVSLNDPEIIREIFIKNYSNFSSRPFLPTITFGSFNYRGISGSNGDYWKRNRNLLLNAMKKSNLKQTYDNLSDSVNSLINLMKEFQSSNESFQPDMYLRKYALTTMFKYVFNETVSFENKIVQGEEAELIDNINEAFNFMTLGNAGDFFKILQPLYYQYLLYRGGCFNRIRTLIRNRYIEHRKTIDIENPRDLLDLLIIEYGDHSDENMISIVQVCFDVILAGVDTLASSLEWFLVMLCNNQQIQDTVYNELKETVVGPVVTLNDRPSTPYTMACIKETIRLKAPAPFGLPHTTDQDIIVKGHFIPKDSMVLINFYSLGRNPKDFPDPLKFDPNRFIGSTPDSFMPFGTGPRNCIGQALGMDQIYLLLSNIFLNFKITSENGKKLDDTDYVSGLNLKPAKYKVCLEKR.

Residues 1 to 21 (MVYLKNILIFLIIFLINPLVK) form a helical membrane-spanning segment. Cys428 serves as a coordination point for heme.

The protein belongs to the cytochrome P450 family. Heme is required as a cofactor.

The protein localises to the membrane. This is Probable cytochrome P450 508D1 (cyp508D1) from Dictyostelium discoideum (Social amoeba).